A 319-amino-acid chain; its full sequence is NADH-quinone oxidoreductase subunit H 1 (319 aa).

8 helical membrane passes run 1-21, 74-94, 107-127, 147-167, 179-199, 238-258, 262-282, and 293-313; these read MIGL…LLVV, FAYI…FGVI, VGVL…VLGA, LAYE…AGSL, VWFV…GVAA, VLLV…GPWL, IWFG…RATL, and FAWK…GIVV.

Belongs to the complex I subunit 1 family. In terms of assembly, NDH-1 is composed of 14 different subunits. Subunits NuoA, H, J, K, L, M, N constitute the membrane sector of the complex.

The protein localises to the cell inner membrane. The enzyme catalyses a quinone + NADH + 5 H(+)(in) = a quinol + NAD(+) + 4 H(+)(out). NDH-1 shuttles electrons from NADH, via FMN and iron-sulfur (Fe-S) centers, to quinones in the respiratory chain. The immediate electron acceptor for the enzyme in this species is believed to be ubiquinone. Couples the redox reaction to proton translocation (for every two electrons transferred, four hydrogen ions are translocated across the cytoplasmic membrane), and thus conserves the redox energy in a proton gradient. This subunit may bind ubiquinone. This chain is NADH-quinone oxidoreductase subunit H 1, found in Rhodopseudomonas palustris (strain BisB5).